The sequence spans 153 residues: Ribosome maturation factor RimP (153 aa).

This sequence belongs to the RimP family.

Its subcellular location is the cytoplasm. Its function is as follows. Required for maturation of 30S ribosomal subunits. This chain is Ribosome maturation factor RimP, found in Chromohalobacter salexigens (strain ATCC BAA-138 / DSM 3043 / CIP 106854 / NCIMB 13768 / 1H11).